A 326-amino-acid chain; its full sequence is Mitochondrial glycine transporter (326 aa).

3 Solcar repeats span residues 22-106 (SKTT…LRTS), 135-216 (SANL…LKRY), and 228-312 (SSSS…LILR). A run of 6 helical transmembrane segments spans residues 28-53 (FGAG…TRVQ), 81-107 (GTLP…RTSL), 138-163 (LATG…VRYE), 191-214 (GFGA…EQLK), 232-258 (INFV…KTRL), and 287-305 (GLGL…AWTV).

It belongs to the mitochondrial carrier (TC 2.A.29) family. SLC25A38 subfamily.

The protein localises to the mitochondrion inner membrane. It catalyses the reaction glycine(in) = glycine(out). Functionally, mitochondrial glycine transporter that imports glycine into the mitochondrial matrix. Plays an important role in providing glycine for the first enzymatic step in heme biosynthesis, the condensation of glycine with succinyl-CoA to produce 5-aminolevulinate (ALA) in the mitochondrial matrix. The chain is Mitochondrial glycine transporter from Emericella nidulans (strain FGSC A4 / ATCC 38163 / CBS 112.46 / NRRL 194 / M139) (Aspergillus nidulans).